The following is a 651-amino-acid chain: Epithelial sodium channel subunit beta (651 aa).

Residues 1–50 (MFLKRWFIRALHRLQKGPGYGYSELFVWYCNNTNTHGPKRLIIEGPKKKT) are Cytoplasmic-facing. The helical transmembrane segment at 51 to 71 (LWSLFTVTFACLVFWQWGLLI) threads the bilayer. At 72–541 (QTYLSWGVSV…GGQFGFWMGG (470 aa)) the chain is on the extracellular side. 8 disulfides stabilise this stretch: C98–C281, C205–C212, C258–C265, C370–C457, C395–C453, C399–C449, C408–C435, and C410–C424. The helical transmembrane segment at 542-562 (SVLCIIEFGEVFIDCIWIAVI) threads the bilayer. Over 563-651 (RFVKWYKNRK…TEHHSDSEDL (89 aa)) the chain is Cytoplasmic. A disordered region spans residues 612-651 (QPPDLYLPTTLEIPGTPPPKYDSLRVHPIDTEHHSDSEDL). Residues 633–651 (DSLRVHPIDTEHHSDSEDL) show a composition bias toward basic and acidic residues.

It belongs to the amiloride-sensitive sodium channel (TC 1.A.6) family. SCNN1B subfamily. As to quaternary structure, component of the heterotrimeric epithelial sodium channel (ENaC) composed of an alpha/SCNN1A, a beta/SCNN1B and a gamma/SCNN1G subunit. As to expression, strongly expressed in gill, kidney and rectum and more weakly in brain, eye, liver and muscle.

The protein resides in the apical cell membrane. It localises to the cytoplasmic vesicle membrane. The enzyme catalyses Na(+)(in) = Na(+)(out). With respect to regulation, originally identified and characterized by its inhibition by the diuretic drug amiloride. Functionally, this is one of the three pore-forming subunits of the heterotrimeric epithelial sodium channel (ENaC), a critical regulator of sodium balance and fluid homeostasis. ENaC operates in epithelial tissues, where it mediates the electrodiffusion of sodium ions from extracellular fluid through the apical membrane of cells, with water following osmotically. The sequence is that of Epithelial sodium channel subunit beta from Neoceratodus forsteri (Australian lungfish).